The primary structure comprises 186 residues: Elongation factor P (186 aa).

Belongs to the elongation factor P family.

It localises to the cytoplasm. The protein operates within protein biosynthesis; polypeptide chain elongation. Its function is as follows. Involved in peptide bond synthesis. Stimulates efficient translation and peptide-bond synthesis on native or reconstituted 70S ribosomes in vitro. Probably functions indirectly by altering the affinity of the ribosome for aminoacyl-tRNA, thus increasing their reactivity as acceptors for peptidyl transferase. This is Elongation factor P from Polynucleobacter asymbioticus (strain DSM 18221 / CIP 109841 / QLW-P1DMWA-1) (Polynucleobacter necessarius subsp. asymbioticus).